A 1502-amino-acid chain; its full sequence is Ras guanine nucleotide exchange factor P (1502 aa).

The Calponin-homology (CH) domain occupies 84–187 (FIIDNQVLDW…LLYSLMKFSE (104 aa)). Disordered stretches follow at residues 216-242 (AQSS…SSNE), 325-436 (QQQQ…PNNN), 456-534 (EDNT…VGRG), and 589-935 (TTTA…NQNN). Composition is skewed to low complexity over residues 218-242 (SSSS…SSNE), 325-345 (QQQQ…TTTT), 371-400 (TTSS…LLNH), and 407-421 (SSST…PIST). The stretch at 287–328 (QQQQQQQQQQQQQQQQQQQQQQQQQQQQQQQQQQQQQQQQQQ) forms a coiled coil. Residues 422–436 (PSTSKSNSFQKPNNN) are compositionally biased toward polar residues. The stretch at 451-515 (EENEIEDNTN…NQNENEDEVK (65 aa)) forms a coiled coil. A compositionally biased stretch (low complexity) spans 458–508 (NTNNNNNNNNNNNNNNNNNNNNNNNNNNNNNNNNTNDNINNNNKNNNNNQN). Residues 518–528 (HSPPKVRPPLP) are compositionally biased toward pro residues. 5 stretches are compositionally biased toward low complexity: residues 589 to 646 (TTTA…NNNN), 663 to 675 (TIST…TGTI), 686 to 719 (SQPL…LSLP), 764 to 790 (NSIN…VSQS), and 813 to 853 (NSNS…NNNN). The segment covering 861–876 (LTMSNQSANSLKSSGN) has biased composition (polar residues). The span at 883-935 (TNGNNNISQNQNQNQNQNQNQTQNQNQNQNQNHISHSNSISSGNLNNHVNQNN) shows a compositional bias: low complexity. Residues 1032-1076 (VEENKNLITRTEEMQKMIDSLMKEKKELINEKNTLASMLAKTKQQ) adopt a coiled-coil conformation. The 148-residue stretch at 1102–1249 (GKYEIKGGTT…SELKLVFSTP (148 aa)) folds into the N-terminal Ras-GEF domain. Positions 1267-1498 (DPAEIARQLT…FNLSLICEPR (232 aa)) constitute a Ras-GEF domain.

Promotes the exchange of Ras-bound GDP by GTP. This Dictyostelium discoideum (Social amoeba) protein is Ras guanine nucleotide exchange factor P (gefP).